A 65-amino-acid chain; its full sequence is uncharacterized protein (65 aa).

The disordered stretch occupies residues 24 to 65; sequence NNNNNNNNNNNNNNNNNNNNNNNNNNNNNNNKNNKNNNKNND.

This is an uncharacterized protein from Dictyostelium discoideum (Social amoeba).